The chain runs to 295 residues: Undecaprenyl-diphosphatase (295 aa).

6 helical membrane passes run 39-59, 97-117, 121-141, 198-218, 232-252, and 263-283; these read PGAA…LLYF, WYII…QHAI, LRNL…LWIV, AFLM…VKAI, ATIA…IGFL, and FAIY…CGVL.

The protein belongs to the UppP family.

The protein resides in the cell membrane. The enzyme catalyses di-trans,octa-cis-undecaprenyl diphosphate + H2O = di-trans,octa-cis-undecaprenyl phosphate + phosphate + H(+). Its function is as follows. Catalyzes the dephosphorylation of undecaprenyl diphosphate (UPP). Confers resistance to bacitracin. The polypeptide is Undecaprenyl-diphosphatase (Bifidobacterium animalis subsp. lactis (strain AD011)).